Consider the following 1013-residue polypeptide: A-type ATP synthase subunit A (1013 aa).

The DOD-type homing endonuclease domain maps to Phe-392–Ile-525.

The protein belongs to the ATPase alpha/beta chains family. As to quaternary structure, has multiple subunits with at least A(3), B(3), C, D, E, F, H, I and proteolipid K(x). This protein undergoes a protein self splicing that involves a post-translational excision of the VDE intervening region (intein) followed by peptide ligation.

The protein resides in the cell membrane. The catalysed reaction is ATP + H2O + 4 H(+)(in) = ADP + phosphate + 5 H(+)(out). Its function is as follows. Component of the A-type ATP synthase that produces ATP from ADP in the presence of a proton gradient across the membrane. The A chain is the catalytic subunit. The chain is A-type ATP synthase subunit A from Pyrococcus furiosus (strain ATCC 43587 / DSM 3638 / JCM 8422 / Vc1).